The sequence spans 235 residues: Interleukin-34 (235 aa).

Positions 1–20 (MPWGLAWLYCLGILLDVALG) are cleaved as a signal peptide. An N-linked (GlcNAc...) asparagine glycan is attached at N100.

It belongs to the IL-34 family. In terms of assembly, homodimer. Interacts with CSF1R.

Its subcellular location is the secreted. Cytokine that promotes the proliferation, survival and differentiation of monocytes and macrophages. Promotes the release of pro-inflammatory chemokines, and thereby plays an important role in innate immunity and in inflammatory processes. Plays an important role in the regulation of osteoclast proliferation and differentiation, and in the regulation of bone resorption. Signaling via CSF1R and its downstream effectors stimulates phosphorylation of MAPK1/ERK2 AND MAPK3/ERK1. This chain is Interleukin-34 (Il34), found in Mus musculus (Mouse).